Reading from the N-terminus, the 115-residue chain is NADH-ubiquinone oxidoreductase chain 3 (115 aa).

The next 3 membrane-spanning stretches (helical) occupy residues 4-24 (IVIL…AFWL), 55-75 (FFLI…LLPL), and 84-104 (TYFT…GLMY).

The protein belongs to the complex I subunit 3 family. As to quaternary structure, core subunit of respiratory chain NADH dehydrogenase (Complex I) which is composed of 45 different subunits. Interacts with TMEM186. Interacts with TMEM242.

Its subcellular location is the mitochondrion inner membrane. It carries out the reaction a ubiquinone + NADH + 5 H(+)(in) = a ubiquinol + NAD(+) + 4 H(+)(out). In terms of biological role, core subunit of the mitochondrial membrane respiratory chain NADH dehydrogenase (Complex I) which catalyzes electron transfer from NADH through the respiratory chain, using ubiquinone as an electron acceptor. Essential for the catalytic activity of complex I. This is NADH-ubiquinone oxidoreductase chain 3 from Eligmodontia typus (Highland gerbil mouse).